The chain runs to 300 residues: Protoheme IX farnesyltransferase (300 aa).

The next 8 helical transmembrane spans lie at valine 24–valine 44, tryptophan 46–isoleucine 66, proline 94–phenylalanine 114, leucine 118–leucine 138, isoleucine 146–glycine 166, alanine 172–leucine 192, valine 224–leucine 244, and isoleucine 278–leucine 298.

This sequence belongs to the UbiA prenyltransferase family. Protoheme IX farnesyltransferase subfamily.

The protein localises to the cell inner membrane. The enzyme catalyses heme b + (2E,6E)-farnesyl diphosphate + H2O = Fe(II)-heme o + diphosphate. The protein operates within porphyrin-containing compound metabolism; heme O biosynthesis; heme O from protoheme: step 1/1. Functionally, converts heme B (protoheme IX) to heme O by substitution of the vinyl group on carbon 2 of heme B porphyrin ring with a hydroxyethyl farnesyl side group. The protein is Protoheme IX farnesyltransferase of Burkholderia ambifaria (strain MC40-6).